The chain runs to 28 residues: Dermaseptin-2 (28 aa).

Glutamine amide is present on Gln28.

It belongs to the frog skin active peptide (FSAP) family. Dermaseptin subfamily. Expressed by the skin glands.

It is found in the secreted. Functionally, antimicrobial peptide with activity against the Gram-positive bacterium S.aureus, and the Gram-negative bacteria E.coli and P.aeruginosa. Probably acts by disturbing membrane functions with its amphipathic structure. Has an activity of stimulation of insulin release, which may protect the species from being eaten by predators by causing fatal hypoglycemia. Has hemolytic activity (60% hemolysis at 128 ug/ml). This Phyllomedusa tarsius (Brownbelly leaf frog) protein is Dermaseptin-2.